Consider the following 137-residue polypeptide: Nucleoside diphosphate kinase (137 aa).

Lys9, Phe57, Arg85, Thr91, Arg102, and Asn112 together coordinate ATP. His115 (pros-phosphohistidine intermediate) is an active-site residue.

This sequence belongs to the NDK family. In terms of assembly, homotetramer. It depends on Mg(2+) as a cofactor.

The protein resides in the cytoplasm. The enzyme catalyses a 2'-deoxyribonucleoside 5'-diphosphate + ATP = a 2'-deoxyribonucleoside 5'-triphosphate + ADP. It catalyses the reaction a ribonucleoside 5'-diphosphate + ATP = a ribonucleoside 5'-triphosphate + ADP. Functionally, major role in the synthesis of nucleoside triphosphates other than ATP. The ATP gamma phosphate is transferred to the NDP beta phosphate via a ping-pong mechanism, using a phosphorylated active-site intermediate. This chain is Nucleoside diphosphate kinase, found in Sulfurimonas denitrificans (strain ATCC 33889 / DSM 1251) (Thiomicrospira denitrificans (strain ATCC 33889 / DSM 1251)).